The sequence spans 113 residues: UPF0122 protein Lreu_1156 (113 aa).

The protein belongs to the UPF0122 family.

Might take part in the signal recognition particle (SRP) pathway. This is inferred from the conservation of its genetic proximity to ftsY/ffh. May be a regulatory protein. This Limosilactobacillus reuteri (strain DSM 20016) (Lactobacillus reuteri) protein is UPF0122 protein Lreu_1156.